A 441-amino-acid polypeptide reads, in one-letter code: Protein kinase C and casein kinase substrate in neurons protein 1 (441 aa).

Phosphoserine is present on residues Ser-2 and Ser-76. The 271-residue stretch at 10–280 folds into the F-BAR domain; it reads EEITDSFWEV…AIRGADAQED (271 aa). A coiled-coil region spans residues 23–272; the sequence is KRTVKRIDDG…HVYRELEQAI (250 aa). A Phosphothreonine modification is found at Thr-181. Positions 310-380 are disordered; sequence AAKKEKQPKK…ANGGANPFED (71 aa). Residues 311–321 show a composition bias toward basic and acidic residues; it reads AKKEKQPKKAE. Over residues 326–348 the composition is skewed to polar residues; it reads SNATGAVESTSQAGDRGSVSSYD. A phosphoserine mark is found at Ser-343, Ser-345, Ser-346, Ser-358, and Ser-362. In terms of domain architecture, SH3 spans 382–441; the sequence is AKGVRVRALYDYDGQEQDELSFKAGDELTKLGEEDEQGWCRGRLDSGQLGLYPANYVEAI. Position 391 is a phosphotyrosine (Tyr-391). Phosphoserine occurs at positions 402 and 427.

Belongs to the PACSIN family. Homodimer. May form heterooligomers with other PACSINs. Interacts with MAPT. Interacts with TRPV4. Interacts (via SH3 domain) with SYNJ1 and WASL. Interacts (via SH3 domain) with DNM1; the interaction is reduced by DNM1 phosphorylation. Interacts with DNM2 and DNM3. Interacts with both COBL and DBNL. Identified in a complex composed of COBL, PACSIN1 and WASL. Interacts with EHD1 and EHD3. Phosphorylated by casein kinase 2 (CK2) and protein kinase C (PKC). In terms of tissue distribution, highly expressed in brain (at protein level).

The protein localises to the cytoplasm. The protein resides in the cell projection. Its subcellular location is the synapse. It is found in the synaptosome. It localises to the ruffle membrane. The protein localises to the membrane. The protein resides in the cytoplasmic vesicle membrane. Its subcellular location is the cytosol. It is found in the cell membrane. Its function is as follows. Binds to membranes via its F-BAR domain and mediates membrane tubulation. Plays a role in the reorganization of the microtubule cytoskeleton via its interaction with MAPT; this decreases microtubule stability and inhibits MAPT-induced microtubule polymerization. Plays a role in cellular transport processes by recruiting DNM1, DNM2 and DNM3 to membranes. Plays a role in the reorganization of the actin cytoskeleton and in neuron morphogenesis via its interaction with COBL and WASL, and by recruiting COBL to the cell cortex. Plays a role in the regulation of neurite formation, neurite branching and the regulation of neurite length. Required for normal synaptic vesicle endocytosis; this process retrieves previously released neurotransmitters to accommodate multiple cycles of neurotransmission. Required for normal excitatory and inhibitory synaptic transmission. The chain is Protein kinase C and casein kinase substrate in neurons protein 1 (Pacsin1) from Rattus norvegicus (Rat).